The chain runs to 503 residues: MSDLKETRLEKAQVLKKLGNGPYGIRFEVTHKAAVLQVEHQDLANGQERQLEVCVAGRVISRRVMGKLAFFTLSDESGSIQLFLEKATLEEHSDLDQESPGSFSQLTDLVDSGDWIGVNGILRRTDRGELSIKVFSWTMLCKSLQPLPDKWHGLSDVEKRYRQRYVDLIVNPQSRKTFRSRALMVSAIRRWLDERDFLEIETPVLQSEAGGAEARPFITHHNTLDLSLYLRIATELHLKRLVVGGFERVYELGRIFRNEGISTRHNPEFTTVEIYQAFADYTDMMDLTEEMISFVCSQICGSTTIQYQGKEVDLTPPWRRITMHELVLESTGLDFYEFGQDISKASTAMQSVGLNVPDHADSVGRLMNEAFEQAVEGDLFQPTFVMDYPIEISPLARKHRSKPGIVERFELFIAGRETANAFSELIDPVDQKERLLLQQSRRQAGDLEAHVIDEDFVNALEVGMPPTGGLGIGIDRLVMLLTDSPSIRDVIAFPLLKPESGSQ.

Mg(2+) contacts are provided by glutamate 410 and glutamate 417.

It belongs to the class-II aminoacyl-tRNA synthetase family. In terms of assembly, homodimer. Mg(2+) serves as cofactor.

The protein resides in the cytoplasm. It carries out the reaction tRNA(Lys) + L-lysine + ATP = L-lysyl-tRNA(Lys) + AMP + diphosphate. This is Lysine--tRNA ligase from Prochlorococcus marinus (strain MIT 9211).